The chain runs to 586 residues: Kelch-like protein 7 (586 aa).

The BTB domain occupies Cys44 to Ser111. Residues Cys146–Gln248 enclose the BACK domain. Kelch repeat units follow at residues Arg294–Asn336, Val337–Gly382, Lys383–Gly430, Leu431–Asp481, Ile483–Ser528, and Ile530–Asp575.

In terms of assembly, homodimer. Component of the BCR(KLHL7) E3 ubiquitin ligase complex, at least composed of CUL3 and KLHL7 and RBX1.

The protein localises to the nucleus. It localises to the cytoplasm. It participates in protein modification; protein ubiquitination. Substrate-specific adapter of a BCR (BTB-CUL3-RBX1) E3 ubiquitin ligase complex. The BCR(KLHL7) complex acts by mediating ubiquitination and subsequent degradation of substrate proteins. Probably mediates 'Lys-48'-linked ubiquitination. The polypeptide is Kelch-like protein 7 (Klhl7) (Mus musculus (Mouse)).